The following is a 465-amino-acid chain: Probable dipeptidase A (465 aa).

The active site involves Cys3.

It belongs to the peptidase C69 family.

The catalysed reaction is an L-aminoacyl-L-amino acid + H2O = 2 an L-alpha-amino acid. The chain is Probable dipeptidase A (pepDA) from Streptococcus pyogenes serotype M3 (strain SSI-1).